The chain runs to 568 residues: PWWP domain-containing protein2 (568 aa).

A compositionally biased stretch (basic and acidic residues) spans 1–19 (MTEIKDSSVKDENPGKQEE). Disordered stretches follow at residues 1-126 (MTEI…YKPG), 213-340 (QSTP…DVAK), and 465-568 (IASL…TGQK). Polar residues predominate over residues 29–46 (MSTATNNSKNIETTSSNG). Composition is skewed to basic and acidic residues over residues 48–88 (EDIK…KTIE) and 100–122 (KSQKSEKSNGNARKETKQSERVN). In terms of domain architecture, PWWP spans 125–189 (PGMRVLTKMS…SDSLTPLTSE (65 aa)). The segment covering 214-228 (STPDLDSLSVPSSES) has biased composition (low complexity). Positions 229–249 (EVSEEESDQEMSEPSPIEEDY) are enriched in acidic residues. Positions 255-266 (RRITRKGTKKKT) are enriched in basic residues. Over residues 281-292 (LNASSNVSSNPA) the composition is skewed to polar residues. A compositionally biased stretch (acidic residues) spans 325–336 (KEEEEGSVANEE). Basic and acidic residues-rich tracts occupy residues 489-500 (KQNEDNEDKVKA) and 514-541 (DASKDMISEEKSSKDADNSLEVAGKDFA).

In Schizosaccharomyces pombe (strain 972 / ATCC 24843) (Fission yeast), this protein is PWWP domain-containing protein2 (pdp2).